Reading from the N-terminus, the 288-residue chain is 2-hydroxy-6-oxononadienedioate/2-hydroxy-6-oxononatrienedioate hydrolase (288 aa).

Residues 38-273 (VVLLHGSGPG…DCGHWAQWEH (236 aa)) form the AB hydrolase-1 domain. Residue H267 is the Proton acceptor of the active site.

This sequence belongs to the AB hydrolase superfamily. MhpC family. In terms of assembly, homodimer.

The catalysed reaction is (2Z,4E)-2-hydroxy-6-oxonona-2,4-dienedioate + H2O = (2Z)-2-hydroxypenta-2,4-dienoate + succinate + H(+). The enzyme catalyses (2Z,4E,7E)-2-hydroxy-6-oxonona-2,4,7-trienedioate + H2O = (2Z)-2-hydroxypenta-2,4-dienoate + fumarate + H(+). It functions in the pathway aromatic compound metabolism; 3-phenylpropanoate degradation. Its function is as follows. Catalyzes the cleavage of the C5-C6 bond of 2-hydroxy-6-oxononadienedioate and 2-hydroxy-6-oxononatrienedioate, a dienol ring fission product of the bacterial meta-cleavage pathway for degradation of phenylpropionic acid. This chain is 2-hydroxy-6-oxononadienedioate/2-hydroxy-6-oxononatrienedioate hydrolase, found in Escherichia coli O139:H28 (strain E24377A / ETEC).